A 295-amino-acid polypeptide reads, in one-letter code: 33 kDa chaperonin (295 aa).

Cystine bridges form between C238-C240 and C271-C274.

This sequence belongs to the HSP33 family. Post-translationally, under oxidizing conditions two disulfide bonds are formed involving the reactive cysteines. Under reducing conditions zinc is bound to the reactive cysteines and the protein is inactive.

It localises to the cytoplasm. Redox regulated molecular chaperone. Protects both thermally unfolding and oxidatively damaged proteins from irreversible aggregation. Plays an important role in the bacterial defense system toward oxidative stress. The protein is 33 kDa chaperonin of Levilactobacillus brevis (strain ATCC 367 / BCRC 12310 / CIP 105137 / JCM 1170 / LMG 11437 / NCIMB 947 / NCTC 947) (Lactobacillus brevis).